We begin with the raw amino-acid sequence, 463 residues long: Xanthone prenyltransferase B (463 aa).

This sequence belongs to the tryptophan dimethylallyltransferase family.

It functions in the pathway secondary metabolite biosynthesis. Its activity is regulated as follows. Mn(2+) and Co(2+) strongly enhance prenylation activity. In terms of biological role, dehydrogenase involved in the conversion of monodictyphenone to the prenyl xanthones such as emericellin, shamixanthone and epishamixanthone. Monodictyphenone is first converted to variecoxanthone A via a paeciloxanthone intermediate by the consecutive actions of the FAD-dependent monooxygenase mdpD and the xanthone prenyltransferase xptB. XptB catalyzes regular O-prenylation at the hydroxy group of C-7 of the xanthone ring. Variecoxanthone A is further prenylated to emericellin by xptA before being reduced to shamixanthone and epishamixanthone by the dehydrogenase xptC. The polypeptide is Xanthone prenyltransferase B (Emericella nidulans (strain FGSC A4 / ATCC 38163 / CBS 112.46 / NRRL 194 / M139) (Aspergillus nidulans)).